Reading from the N-terminus, the 1128-residue chain is Major DNA-binding protein (1128 aa).

The tract at residues 1104–1128 is required for nuclear localization; it reads LGGGGQGSGGRRKRRLATVLPGLEV.

This sequence belongs to the herpesviridae major DNA-binding protein family. In terms of assembly, homooligomers. Forms double-helical filaments necessary for the formation of replication compartments within the host nucleus. Interacts with the origin-binding protein. Interacts with the helicase primase complex; this interaction stimulates primer synthesis activity of the helicase-primase complex. Interacts with the DNA polymerase. Interacts with the alkaline exonuclease; this interaction increases its nuclease processivity.

The protein resides in the virion tegument. It is found in the host nucleus. Its function is as follows. Plays several crucial roles in viral infection. Participates in the opening of the viral DNA origin to initiate replication by interacting with the origin-binding protein. May disrupt loops, hairpins and other secondary structures present on ssDNA to reduce and eliminate pausing of viral DNA polymerase at specific sites during elongation. Promotes viral DNA recombination by performing strand-transfer, characterized by the ability to transfer a DNA strand from a linear duplex to a complementary single-stranded DNA circle. Can also catalyze the renaturation of complementary single strands. Additionally, reorganizes the host cell nucleus, leading to the formation of prereplicative sites and replication compartments. This process is driven by the protein which can form double-helical filaments in the absence of DNA. The protein is Major DNA-binding protein of Homo sapiens (Human).